The following is a 213-amino-acid chain: Pyridoxine/pyridoxamine 5'-phosphate oxidase (213 aa).

FMN contacts are provided by residues 60-65 (RMVLMK), 75-76 (YS), lysine 82, and glutamine 104. Lysine 65 provides a ligand contact to substrate. Substrate contacts are provided by tyrosine 122 and arginine 126. FMN-binding positions include 139–140 (QS) and tryptophan 184. 190–192 (RLH) lines the substrate pocket. An FMN-binding site is contributed by arginine 194.

This sequence belongs to the pyridoxamine 5'-phosphate oxidase family. Homodimer. FMN is required as a cofactor.

The enzyme catalyses pyridoxamine 5'-phosphate + O2 + H2O = pyridoxal 5'-phosphate + H2O2 + NH4(+). It carries out the reaction pyridoxine 5'-phosphate + O2 = pyridoxal 5'-phosphate + H2O2. The protein operates within cofactor metabolism; pyridoxal 5'-phosphate salvage; pyridoxal 5'-phosphate from pyridoxamine 5'-phosphate: step 1/1. It participates in cofactor metabolism; pyridoxal 5'-phosphate salvage; pyridoxal 5'-phosphate from pyridoxine 5'-phosphate: step 1/1. Catalyzes the oxidation of either pyridoxine 5'-phosphate (PNP) or pyridoxamine 5'-phosphate (PMP) into pyridoxal 5'-phosphate (PLP). The polypeptide is Pyridoxine/pyridoxamine 5'-phosphate oxidase (Nitrobacter hamburgensis (strain DSM 10229 / NCIMB 13809 / X14)).